A 298-amino-acid polypeptide reads, in one-letter code: ATP phosphoribosyltransferase (298 aa).

This sequence belongs to the ATP phosphoribosyltransferase family. Long subfamily. Requires Mg(2+) as cofactor.

It is found in the cytoplasm. The catalysed reaction is 1-(5-phospho-beta-D-ribosyl)-ATP + diphosphate = 5-phospho-alpha-D-ribose 1-diphosphate + ATP. It participates in amino-acid biosynthesis; L-histidine biosynthesis; L-histidine from 5-phospho-alpha-D-ribose 1-diphosphate: step 1/9. With respect to regulation, feedback inhibited by histidine. Its function is as follows. Catalyzes the condensation of ATP and 5-phosphoribose 1-diphosphate to form N'-(5'-phosphoribosyl)-ATP (PR-ATP). Has a crucial role in the pathway because the rate of histidine biosynthesis seems to be controlled primarily by regulation of HisG enzymatic activity. The polypeptide is ATP phosphoribosyltransferase (Vibrio vulnificus (strain CMCP6)).